Here is a 259-residue protein sequence, read N- to C-terminus: Insulin-like growth factor-binding protein 1 (259 aa).

A signal peptide spans 1–25 (MSEVPVARVWLVLLLLTVQVGVTAG). The 82-residue stretch at 26–107 (APWQCAPCSA…TRGQGACVQE (82 aa)) folds into the IGFBP N-terminal domain. 6 cysteine pairs are disulfide-bonded: Cys-30–Cys-57, Cys-33–Cys-59, Cys-41–Cys-60, Cys-48–Cys-63, Cys-71–Cys-84, and Cys-78–Cys-104. The residue at position 45 (Ser-45) is a Phosphoserine; by FAM20C. Phosphoserine is present on residues Ser-120, Ser-123, Ser-126, and Ser-144. Ser-156 is subject to Phosphoserine; by FAM20C. Thr-157 carries the phosphothreonine; by FAM20C modification. A Phosphotyrosine modification is found at Tyr-158. A Thyroglobulin type-1 domain is found at 173–251 (KEPCRIELYR…SPEIRGDPNC (79 aa)). Disulfide bonds link Cys-176/Cys-206, Cys-217/Cys-228, and Cys-230/Cys-251. Thr-193 is subject to Phosphothreonine; by FAM20C. A phosphoserine; by FAM20C mark is found at Ser-194 and Ser-199. A Phosphoserine; by FAM20C modification is found at Ser-242. The short motif at 246–248 (RGD) is the Cell attachment site element.

In terms of assembly, binds equally well IGF1 and IGF2. Interacts with integrin ITGA5:ITGB1. Interacts with VHL; this interaction inhibits HIF1A degradation. Post-translationally, phosphorylated; probably by casein kinase II. Phosphorylation alters the affinity of the protein for IGFs. In amniotic fluid, the unmodified protein is the most abundant form, while mono-, bi-, tri- and tetraphosphorylated forms are present in decreasing amounts. The phosphorylation state may influence the propensity to proteolysis.

It is found in the secreted. Multifunctional protein that plays a critical role in regulating the availability of IGFs such as IGF1 and IGF2 to their receptors and thereby regulates IGF-mediated cellular processes including cell migration, proliferation, differentiation or apoptosis in a cell-type specific manner. Also plays a positive role in cell migration by interacting with integrin ITGA5:ITGB1 through its RGD motif. Mechanistically, binding to integrins leads to activation of focal adhesion kinase/PTK2 and stimulation of the mitogen-activated protein kinase (MAPK) pathway. Regulates cardiomyocyte apoptosis by suppressing HIF-1alpha/HIF1A ubiquitination and subsequent degradation. The chain is Insulin-like growth factor-binding protein 1 (IGFBP1) from Homo sapiens (Human).